A 344-amino-acid polypeptide reads, in one-letter code: Melanocyte-stimulating hormone receptor (344 aa).

At 1 to 37 (MPMQGAQRKLLGSLNSTPTATSNLGLAANHTGAPCLE) the chain is on the extracellular side. An N-linked (GlcNAc...) asparagine glycan is attached at Asn29. A helical membrane pass occupies residues 38–63 (VSIPDGLFLSLGLVSLVENVLVVAAI). Residues 64–72 (AKNRNLHSS) lie on the Cytoplasmic side of the membrane. A helical transmembrane segment spans residues 73-93 (MYCFICCLALSDLLVSGSNML). The Extracellular segment spans residues 94–118 (ETAIILLLEAGTLATRASVVQQLHN). A helical transmembrane segment spans residues 119-140 (TIDVLTCSSMLCSLCFLGAIAV). Topologically, residues 141–163 (DRYISIFYALRYHSIMTLPRAQR) are cytoplasmic. A helical transmembrane segment spans residues 164 to 183 (AIAAIWVTSVLSSTLFITYY). The Extracellular portion of the chain corresponds to 184-191 (DHAAVLLC). Residues 192–211 (LVVFFLAMLVLMAVLYVHML) form a helical membrane-spanning segment. Residues 212 to 240 (ARACQHAQGIIRLHNRQLPAHKGFGLRGA) lie on the Cytoplasmic side of the membrane. Residues 241–266 (ATLTILLGIFFLCWGPFFLHLTLVVF) traverse the membrane as a helical segment. Residues 267–279 (CPQHLTCNCIFKN) are Extracellular-facing. Residues 280–300 (FKVFLTLIICNTIIDPLIYAF) traverse the membrane as a helical segment. Residues 301–344 (RSQELRRTLKEVLLCSWWPGCGAEGGGDSVWPGSCVTLRGPLPP) are Cytoplasmic-facing. Cys315 carries S-palmitoyl cysteine lipidation.

It belongs to the G-protein coupled receptor 1 family. Interacts with MGRN1, but does not undergo MGRN1-mediated ubiquitination; this interaction competes with GNAS-binding and thus inhibits agonist-induced cAMP production. Interacts with OPN3; the interaction results in a decrease in MC1R-mediated cAMP signaling and ultimately a decrease in melanin production in melanocytes.

It localises to the cell membrane. In terms of biological role, receptor for MSH (alpha, beta and gamma) and ACTH. The activity of this receptor is mediated by G proteins which activate adenylate cyclase. Mediates melanogenesis, the production of eumelanin (black/brown) and phaeomelanin (red/yellow), via regulation of cAMP signaling in melanocytes. The polypeptide is Melanocyte-stimulating hormone receptor (MC1R) (Mico argentatus (Silvery marmoset)).